A 136-amino-acid polypeptide reads, in one-letter code: Histone H3, embryonic (136 aa).

Residues 1–43 (MARTKQTARKSTGGKAPRKQLATKAARKSAPATGGVKKPHRYR) form a disordered region. Position 5 is an N6-methylated lysine (Lys-5). An N6-acetyllysine; alternate modification is found at Lys-10. Lys-10 bears the N6-methylated lysine; alternate mark. Ser-11 is modified (phosphoserine). N6-acetyllysine occurs at positions 15 and 24. An N6-methylated lysine mark is found at Lys-28, Lys-37, and Lys-80.

It belongs to the histone H3 family. In terms of assembly, the nucleosome is a histone octamer containing two molecules each of H2A, H2B, H3 and H4 assembled in one H3-H4 heterotetramer and two H2A-H2B heterodimers. The octamer wraps approximately 147 bp of DNA. Acetylation is generally linked to gene activation. Post-translationally, methylation at Lys-5 is linked to gene activation. Methylation at Lys-10 is linked to gene repression.

Its subcellular location is the nucleus. The protein localises to the chromosome. Functionally, core component of nucleosome. Nucleosomes wrap and compact DNA into chromatin, limiting DNA accessibility to the cellular machineries which require DNA as a template. Histones thereby play a central role in transcription regulation, DNA repair, DNA replication and chromosomal stability. DNA accessibility is regulated via a complex set of post-translational modifications of histones, also called histone code, and nucleosome remodeling. The sequence is that of Histone H3, embryonic from Paracentrotus lividus (Common sea urchin).